A 328-amino-acid polypeptide reads, in one-letter code: MDTKMEDVGKTPEPIRFQTTTEPASISTLDGWIENLMACKQLPEVDVLRLCEKAREVLHSESNVQPVKCPVTVCGDIHGQFHDLMELFRIGGPNPDTNYLFMGDYVDRGYYSVETVTLLVALKIRYPQRITILRGNHESRQITQVYGFYDECLRKYGNANVWKYFTNLFDFLPLTALIENQIFCLHGGLSPSIDTLDNIKSLDRIQEVPHEGPMCDLLWSDPDDRCGWGISPRGAGYTFGQDISEAFNHNNGLTLVARAHQLVMEGYNWSQDRNVVTIFSAPNYCYRCGNQAAIMEIDEHLKYTFLQFDPCPRAGEPMVTRRTPDYFL.

Residues Asp76, His78, Asp104, and Asn136 each coordinate Mn(2+). His137 acts as the Proton donor in catalysis. Mn(2+) contacts are provided by His186 and His260. At Leu328 the chain carries Leucine methyl ester.

This sequence belongs to the PPP phosphatase family. PP-2A subfamily. The cofactor is Mn(2+).

It carries out the reaction O-phospho-L-seryl-[protein] + H2O = L-seryl-[protein] + phosphate. The catalysed reaction is O-phospho-L-threonyl-[protein] + H2O = L-threonyl-[protein] + phosphate. The sequence is that of Serine/threonine-protein phosphatase PP2A-2 catalytic subunit (PP2A-2) from Blumeria hordei (Barley powdery mildew).